The following is a 465-amino-acid chain: Hydroxyacid-oxoacid transhydrogenase, mitochondrial (465 aa).

An N6-acetyllysine modification is found at K443. S450 is subject to Phosphoserine.

This sequence belongs to the iron-containing alcohol dehydrogenase family. Hydroxyacid-oxoacid transhydrogenase subfamily. As to expression, expressed in white and brown adipose tissues, liver, and kidney. Expression is differentiation-dependent during in vitro brown and white adipogenesis.

The protein localises to the mitochondrion. It carries out the reaction (S)-3-hydroxybutanoate + 2-oxoglutarate = (R)-2-hydroxyglutarate + acetoacetate. The enzyme catalyses 4-hydroxybutanoate + 2-oxoglutarate = (R)-2-hydroxyglutarate + succinate semialdehyde. Catalyzes the cofactor-independent reversible oxidation of gamma-hydroxybutyrate (GHB) to succinic semialdehyde (SSA) coupled to reduction of 2-ketoglutarate (2-KG) to D-2-hydroxyglutarate (D-2-HG). L-3-hydroxybutyrate (L-3-OHB) is also a substrate for HOT when using 2-KG as hydrogen acceptor, resulting in the formation of D-2-HG. The protein is Hydroxyacid-oxoacid transhydrogenase, mitochondrial (Adhfe1) of Mus musculus (Mouse).